The following is a 316-amino-acid chain: Adenine deaminase (316 aa).

The Zn(2+) site is built by histidine 14, histidine 16, and histidine 194. The Proton donor role is filled by glutamate 197. Residue aspartate 275 participates in Zn(2+) binding. Position 276 (aspartate 276) interacts with substrate.

The protein belongs to the metallo-dependent hydrolases superfamily. Adenosine and AMP deaminases family. Adenine deaminase type 2 subfamily. Requires Zn(2+) as cofactor.

It carries out the reaction adenine + H2O + H(+) = hypoxanthine + NH4(+). In terms of biological role, catalyzes the hydrolytic deamination of adenine to hypoxanthine. Plays an important role in the purine salvage pathway and in nitrogen catabolism. The protein is Adenine deaminase of Bordetella avium (strain 197N).